Reading from the N-terminus, the 678-residue chain is PTS system glucose-specific EIICBA component (678 aa).

The 412-residue stretch at 3-414 (KKLFGQLQRI…FKYKTPGRED (412 aa)) folds into the PTS EIIC type-1 domain. Helical transmembrane passes span 16-36 (LMLP…GTAM), 63-83 (AGGI…AIGL), 89-109 (VAAI…GAFL), 126-146 (VLGI…GALA), 170-190 (FVPI…AWIW), 211-231 (LAVF…LHHI), 273-293 (FMQG…LAIY), 303-323 (VVAG…ITEP), 329-349 (LFVA…SFLI), 355-375 (VHLG…GVLP), and 382-402 (LVIP…RFLI). The region spanning 425–506 (SELPFNVLKA…SLIMKGEITK (82 aa)) is the PTS EIIB type-1 domain. Cysteine 447 (phosphocysteine intermediate; for EIIB activity) is an active-site residue. A PTS EIIA type-1 domain is found at 547 to 651 (DQVFAQKMMG…STVTPLIITN (105 aa)). Histidine 599 functions as the Tele-phosphohistidine intermediate; for EIIA activity in the catalytic mechanism.

It localises to the cell membrane. The enzyme catalyses N(pros)-phospho-L-histidyl-[protein] + D-glucose(out) = D-glucose 6-phosphate(in) + L-histidyl-[protein]. The phosphoenolpyruvate-dependent sugar phosphotransferase system (sugar PTS), a major carbohydrate active transport system, catalyzes the phosphorylation of incoming sugar substrates concomitantly with their translocation across the cell membrane. This system is involved in glucose transport. This is PTS system glucose-specific EIICBA component (ptsG) from Staphylococcus saprophyticus subsp. saprophyticus (strain ATCC 15305 / DSM 20229 / NCIMB 8711 / NCTC 7292 / S-41).